Consider the following 263-residue polypeptide: uncharacterized protein (263 aa).

31 to 38 lines the ATP pocket; sequence GPTGSGKT.

The protein belongs to the CbbQ/NirQ/NorQ/GpvN family.

This is an uncharacterized protein from Staphylococcus epidermidis (strain ATCC 35984 / DSM 28319 / BCRC 17069 / CCUG 31568 / BM 3577 / RP62A).